A 306-amino-acid polypeptide reads, in one-letter code: Porphobilinogen deaminase (306 aa).

Position 240 is an S-(dipyrrolylmethanemethyl)cysteine (C240).

This sequence belongs to the HMBS family. In terms of assembly, monomer. The cofactor is dipyrromethane.

The catalysed reaction is 4 porphobilinogen + H2O = hydroxymethylbilane + 4 NH4(+). It functions in the pathway porphyrin-containing compound metabolism; protoporphyrin-IX biosynthesis; coproporphyrinogen-III from 5-aminolevulinate: step 2/4. Tetrapolymerization of the monopyrrole PBG into the hydroxymethylbilane pre-uroporphyrinogen in several discrete steps. This is Porphobilinogen deaminase from Thiobacillus denitrificans (strain ATCC 25259 / T1).